The chain runs to 455 residues: L-serine dehydratase (455 aa).

The protein belongs to the iron-sulfur dependent L-serine dehydratase family. [4Fe-4S] cluster is required as a cofactor.

It carries out the reaction L-serine = pyruvate + NH4(+). It participates in carbohydrate biosynthesis; gluconeogenesis. The polypeptide is L-serine dehydratase (sdaA) (Helicobacter pylori (strain J99 / ATCC 700824) (Campylobacter pylori J99)).